The following is a 78-amino-acid chain: Cytochrome c oxidase subunit 8, mitochondrial (78 aa).

Residues 1–27 constitute a mitochondrion transit peptide; the sequence is MLCQQMIRTTAKRSSNIMTRPIIMKRS. The Mitochondrial matrix segment spans residues 28–51; sequence VHFKDGVYENIPFKVKGRKTPYAL. The helical transmembrane segment at 52–73 threads the bilayer; it reads SHFGFFAIGFAVPFVACYVQLK. Position 74 (lysine 74) is a topological domain, mitochondrial intermembrane. Residues 75–78 constitute a propeptide that is removed on maturation; the sequence is SGAF.

Belongs to the cytochrome c oxidase VIIc family. Component of the cytochrome c oxidase (complex IV, CIV), a multisubunit enzyme composed of 12 subunits. The complex is composed of a catalytic core of 3 subunits COX1, COX2 and COX3, encoded in the mitochondrial DNA, and 9 supernumerary subunits COX4, COX5A (or COX5B), COX6, COX7, COX8, COX9, COX12, COX13 and COX26, which are encoded in the nuclear genome. The complex exists as a monomer or a dimer and forms supercomplexes (SCs) in the inner mitochondrial membrane with a dimer of ubiquinol-cytochrome c oxidoreductase (cytochrome b-c1 complex, complex III, CIII), resulting in 2 different assemblies (supercomplexes III(2)IV and III(2)IV(2)).

The protein localises to the mitochondrion inner membrane. It functions in the pathway energy metabolism; oxidative phosphorylation. Its function is as follows. Component of the cytochrome c oxidase, the last enzyme in the mitochondrial electron transport chain which drives oxidative phosphorylation. The respiratory chain contains 3 multisubunit complexes succinate dehydrogenase (complex II, CII), ubiquinol-cytochrome c oxidoreductase (cytochrome b-c1 complex, complex III, CIII) and cytochrome c oxidase (complex IV, CIV), that cooperate to transfer electrons derived from NADH and succinate to molecular oxygen, creating an electrochemical gradient over the inner membrane that drives transmembrane transport and the ATP synthase. Cytochrome c oxidase is the component of the respiratory chain that catalyzes the reduction of oxygen to water. Electrons originating from reduced cytochrome c in the intermembrane space (IMS) are transferred via the dinuclear copper A center (CU(A)) of COX2 and heme A of COX1 to the active site in COX1, a binuclear center (BNC) formed by heme A3 and copper B (CU(B)). The BNC reduces molecular oxygen to 2 water molecules using 4 electrons from cytochrome c in the IMS and 4 protons from the mitochondrial matrix. In Saccharomyces cerevisiae (strain ATCC 204508 / S288c) (Baker's yeast), this protein is Cytochrome c oxidase subunit 8, mitochondrial (COX8).